A 665-amino-acid polypeptide reads, in one-letter code: Methionine--tRNA ligase (665 aa).

Positions 13–23 (YYPSGKLHIGS) match the 'HIGH' region motif. Residues 309–313 (KMSKS) carry the 'KMSKS' region motif. Lys-312 contacts ATP. One can recognise a tRNA-binding domain in the interval 562–665 (DFDKVEIRVA…PAVPNGSVIG (104 aa)).

It belongs to the class-I aminoacyl-tRNA synthetase family. MetG type 2B subfamily. In terms of assembly, homodimer.

It is found in the cytoplasm. It catalyses the reaction tRNA(Met) + L-methionine + ATP = L-methionyl-tRNA(Met) + AMP + diphosphate. Its function is as follows. Is required not only for elongation of protein synthesis but also for the initiation of all mRNA translation through initiator tRNA(fMet) aminoacylation. In Streptococcus pneumoniae serotype 4 (strain ATCC BAA-334 / TIGR4), this protein is Methionine--tRNA ligase (metG).